The chain runs to 203 residues: Glycerol-3-phosphate acyltransferase (203 aa).

5 consecutive transmembrane segments (helical) span residues T13 to T33, T66 to V86, A88 to F108, I118 to A138, and I156 to M176.

Belongs to the PlsY family. As to quaternary structure, probably interacts with PlsX.

Its subcellular location is the cell inner membrane. It catalyses the reaction an acyl phosphate + sn-glycerol 3-phosphate = a 1-acyl-sn-glycero-3-phosphate + phosphate. It functions in the pathway lipid metabolism; phospholipid metabolism. Its function is as follows. Catalyzes the transfer of an acyl group from acyl-phosphate (acyl-PO(4)) to glycerol-3-phosphate (G3P) to form lysophosphatidic acid (LPA). This enzyme utilizes acyl-phosphate as fatty acyl donor, but not acyl-CoA or acyl-ACP. The polypeptide is Glycerol-3-phosphate acyltransferase (Sinorhizobium medicae (strain WSM419) (Ensifer medicae)).